A 379-amino-acid chain; its full sequence is Homoserine O-succinyltransferase (379 aa).

An AB hydrolase-1 domain is found at 51-360; that stretch reads NAVLICHALS…DSPYGHDAFL (310 aa). Ser-157 serves as the catalytic Nucleophile. Residue Arg-227 participates in substrate binding. Catalysis depends on residues Asp-323 and His-356. Asp-357 is a binding site for substrate.

Belongs to the AB hydrolase superfamily. MetX family. Homodimer.

It is found in the cytoplasm. It carries out the reaction L-homoserine + succinyl-CoA = O-succinyl-L-homoserine + CoA. It participates in amino-acid biosynthesis; L-methionine biosynthesis via de novo pathway; O-succinyl-L-homoserine from L-homoserine: step 1/1. With respect to regulation, requires MetW for activity. Functionally, transfers a succinyl group from succinyl-CoA to L-homoserine, forming succinyl-L-homoserine. The protein is Homoserine O-succinyltransferase of Pseudomonas putida (strain ATCC 47054 / DSM 6125 / CFBP 8728 / NCIMB 11950 / KT2440).